A 289-amino-acid polypeptide reads, in one-letter code: NAD kinase (289 aa).

Asp-82 serves as the catalytic Proton acceptor. Residues 82–83 (DG), Arg-87, 150–151 (NE), Lys-161, Arg-178, Asp-180, 191–196 (TAYAMS), Ala-215, and Gln-250 each bind NAD(+).

The protein belongs to the NAD kinase family. Requires a divalent metal cation as cofactor.

The protein localises to the cytoplasm. It carries out the reaction NAD(+) + ATP = ADP + NADP(+) + H(+). Its function is as follows. Involved in the regulation of the intracellular balance of NAD and NADP, and is a key enzyme in the biosynthesis of NADP. Catalyzes specifically the phosphorylation on 2'-hydroxyl of the adenosine moiety of NAD to yield NADP. This Methanosarcina mazei (strain ATCC BAA-159 / DSM 3647 / Goe1 / Go1 / JCM 11833 / OCM 88) (Methanosarcina frisia) protein is NAD kinase.